The primary structure comprises 220 residues: Recombination protein RecR (220 aa).

A C4-type zinc finger spans residues 57–72 (CPICFNITDAEKCDVC). The Toprim domain occupies 80–173 (RTICVVEEPG…AISRIAYGVP (94 aa)). The segment at 190–220 (LTGRQTVSKPQPPQRPGDEDGADGAAVPASR) is disordered.

This sequence belongs to the RecR family.

May play a role in DNA repair. It seems to be involved in an RecBC-independent recombinational process of DNA repair. It may act with RecF and RecO. This chain is Recombination protein RecR, found in Deinococcus radiodurans (strain ATCC 13939 / DSM 20539 / JCM 16871 / CCUG 27074 / LMG 4051 / NBRC 15346 / NCIMB 9279 / VKM B-1422 / R1).